Consider the following 130-residue polypeptide: Lysozyme C (130 aa).

Residues 1–130 (KVWERCALAR…VEQYVEGCDL (130 aa)) enclose the C-type lysozyme domain. Cystine bridges form between C6–C128, C30–C116, C65–C81, and C77–C95. Active-site residues include E35 and D53.

It belongs to the glycosyl hydrolase 22 family. As to quaternary structure, monomer.

It catalyses the reaction Hydrolysis of (1-&gt;4)-beta-linkages between N-acetylmuramic acid and N-acetyl-D-glucosamine residues in a peptidoglycan and between N-acetyl-D-glucosamine residues in chitodextrins.. Lysozymes have primarily a bacteriolytic function; those in tissues and body fluids are associated with the monocyte-macrophage system and enhance the activity of immunoagents. The protein is Lysozyme C (LYZ) of Camelus dromedarius (Dromedary).